Reading from the N-terminus, the 132-residue chain is UPF0299 membrane protein YohJ (132 aa).

4 consecutive transmembrane segments (helical) span residues 7–27, 31–51, 63–83, and 93–113; these read IIWQ…AGIF, LLPI…VLLA, GCYV…VGVM, and FGPV…VVSW.

Belongs to the UPF0299 family.

Its subcellular location is the cell inner membrane. This Salmonella agona (strain SL483) protein is UPF0299 membrane protein YohJ.